The chain runs to 448 residues: uncharacterized protein (448 aa).

In terms of tissue distribution, component of the acid-insoluble and acid-soluble organic matrix of the aragonitic skeleton (at protein level).

The protein resides in the secreted. This is an uncharacterized protein from Acropora millepora (Staghorn coral).